Consider the following 80-residue polypeptide: Exodeoxyribonuclease 7 small subunit (80 aa).

The protein belongs to the XseB family. As to quaternary structure, heterooligomer composed of large and small subunits.

It localises to the cytoplasm. It carries out the reaction Exonucleolytic cleavage in either 5'- to 3'- or 3'- to 5'-direction to yield nucleoside 5'-phosphates.. Bidirectionally degrades single-stranded DNA into large acid-insoluble oligonucleotides, which are then degraded further into small acid-soluble oligonucleotides. The chain is Exodeoxyribonuclease 7 small subunit from Enterobacter sp. (strain 638).